Here is an 802-residue protein sequence, read N- to C-terminus: Homeobox-leucine zipper protein ANTHOCYANINLESS 2 (802 aa).

The disordered stretch occupies residues 71–143 (QPERGTNRGE…RKKRYHRHTP (73 aa)). Positions 103–113 (RSREEEHESRS) are enriched in basic and acidic residues. The span at 133 to 142 (PRKKRYHRHT) shows a compositional bias: basic residues. The segment at residues 134-193 (RKKRYHRHTPQQIQELESMFKECPHPDEKQRLELSKRLCLETRQVKFWFQNRRTQMKTQL) is a DNA-binding region (homeobox). Positions 182-221 (FQNRRTQMKTQLERHENALLRQENDKLRAENMSIREAMRN) form a coiled coil. The region spanning 315-546 (GIDQKSVLLE…LQRQCECLAI (232 aa)) is the START domain.

It belongs to the HD-ZIP homeobox family. Class IV subfamily. In terms of assembly, interacts with AIL7/PLT7, ANT, BBM and AIL1. Expressed in roots, stems, leaves and floral buds.

Its subcellular location is the nucleus. In terms of biological role, probable transcription factor involved in the regulation of the tissue-specific accumulation of anthocyanins and in cellular organization of the primary root. The polypeptide is Homeobox-leucine zipper protein ANTHOCYANINLESS 2 (Arabidopsis thaliana (Mouse-ear cress)).